The following is a 352-amino-acid chain: Protein RecA (352 aa).

66-73 (GPESSGKT) serves as a coordination point for ATP. Residues 330 to 352 (TKDDSKVATVDKANEEQAAEPVQ) form a disordered region.

It belongs to the RecA family.

It is found in the cytoplasm. In terms of biological role, can catalyze the hydrolysis of ATP in the presence of single-stranded DNA, the ATP-dependent uptake of single-stranded DNA by duplex DNA, and the ATP-dependent hybridization of homologous single-stranded DNAs. It interacts with LexA causing its activation and leading to its autocatalytic cleavage. This is Protein RecA from Psychrobacter cryohalolentis (strain ATCC BAA-1226 / DSM 17306 / VKM B-2378 / K5).